A 241-amino-acid polypeptide reads, in one-letter code: MWCYRGGSISTEPRINDRIRVPEVRLVGPSGEQVGIVPLAKALELAQEYDLDLVEVAASARPPVCKLMDYGKFKYESAMKAREARKNQAHTVIKEMKLRPKIDPHDYDTKKGHVVRFLKQGDKVKITIMFRGREQSRPELGYRLLQRLATDVEDLGFVESSPKQDGRNMIMVLGPHKKKTEAMAEAREAQAARKAEAKANPGRSQNAADEDIPEGELPEGEVPEAETTEAAEAPAEASTEA.

Residues 178–241 form a disordered region; that stretch reads KKTEAMAEAR…EAPAEASTEA (64 aa). Residues 180 to 197 are compositionally biased toward basic and acidic residues; that stretch reads TEAMAEAREAQAARKAEA. Over residues 208 to 229 the composition is skewed to acidic residues; it reads ADEDIPEGELPEGEVPEAETTE. A compositionally biased stretch (low complexity) spans 230 to 241; that stretch reads AAEAPAEASTEA.

The protein belongs to the IF-3 family. As to quaternary structure, monomer.

It is found in the cytoplasm. Its function is as follows. IF-3 binds to the 30S ribosomal subunit and shifts the equilibrium between 70S ribosomes and their 50S and 30S subunits in favor of the free subunits, thus enhancing the availability of 30S subunits on which protein synthesis initiation begins. In Streptomyces avermitilis (strain ATCC 31267 / DSM 46492 / JCM 5070 / NBRC 14893 / NCIMB 12804 / NRRL 8165 / MA-4680), this protein is Translation initiation factor IF-3.